A 188-amino-acid chain; its full sequence is Cell division protein ZapC (188 aa).

It belongs to the ZapC family. Interacts directly with FtsZ.

Its subcellular location is the cytoplasm. In terms of biological role, contributes to the efficiency of the cell division process by stabilizing the polymeric form of the cell division protein FtsZ. Acts by promoting interactions between FtsZ protofilaments and suppressing the GTPase activity of FtsZ. This is Cell division protein ZapC from Psychromonas ingrahamii (strain DSM 17664 / CCUG 51855 / 37).